Reading from the N-terminus, the 506-residue chain is Maturase K (506 aa).

The protein belongs to the intron maturase 2 family. MatK subfamily.

It localises to the plastid. The protein resides in the chloroplast. Its function is as follows. Usually encoded in the trnK tRNA gene intron. Probably assists in splicing its own and other chloroplast group II introns. In Arabis alpina (Alpine rock-cress), this protein is Maturase K.